The following is a 410-amino-acid chain: Magnesium transporter NIPA3 (410 aa).

The Extracellular portion of the chain corresponds to 1-67; the sequence is MGAQVRLPPG…ISANVENKYS (67 aa). Residues Asn25, Asn35, Asn50, and Asn55 are each glycosylated (N-linked (GlcNAc...) asparagine). Residues 68-88 form a helical membrane-spanning segment; it reads LYVGLVLAVSSSIFIGSSFIL. Topologically, residues 89 to 114 are cytoplasmic; it reads KKKGLLQLASKGFTRAGQGGHSYLKE. Residues 115–135 traverse the membrane as a helical segment; it reads WLWWVGLLSMGAGEAANFAAY. Position 136 (Ala136) is a topological domain, extracellular. A helical membrane pass occupies residues 137-157; sequence FAPATLVTPLGALSVLISAIL. Over 158–165 the chain is Cytoplasmic; sequence SSYFLNEH. The helical transmembrane segment at 166 to 186 threads the bilayer; that stretch reads LNIHGKIGCILSILGSTVMVI. At 187 to 207 the chain is on the extracellular side; that stretch reads HAPQEEEVTSLHEMEMKLRDP. Residues 208–228 form a helical membrane-spanning segment; it reads GFISFAVIITVISLVLILIVA. Residues 229–233 lie on the Cytoplasmic side of the membrane; it reads PKKGQ. A helical transmembrane segment spans residues 234-254; it reads TNILVYISICSLIGAFSVSSV. The Extracellular segment spans residues 255 to 273; it reads KGLGIAIKELIEWKPVYKH. The chain crosses the membrane as a helical span at residues 274–294; it reads PLVFVLLAVLVLSVTTQINYL. Over 295–305 the chain is Cytoplasmic; the sequence is NKALDTFNTSL. The chain crosses the membrane as a helical span at residues 306–326; the sequence is VTPIYYVFFTSMVVTCSAILF. The Extracellular segment spans residues 327–336; sequence QEWYGMTAGD. Residues 337-357 traverse the membrane as a helical segment; it reads IIGTLSGFFTIIIGIFLLHAF. At 358–410 the chain is on the cytoplasmic side; the sequence is KNTDITWSELTSTAKKEAVSLNVNENNYVLLENLECSAPGYNDDVTLFSRTDD.

The protein belongs to the NIPA family. Expressed in the pancreatic islets.

It is found in the golgi apparatus membrane. The enzyme catalyses Mg(2+)(in) = Mg(2+)(out). Functionally, acts as a Mg(2+) transporter. Can also transport other divalent cations such as Fe(2+), Sr(2+), Ba(2+), Mn(2+), Cu(2+) and Co(2+) but to a much less extent than Mg(2+). The protein is Magnesium transporter NIPA3 (NIPAL1) of Homo sapiens (Human).